A 130-amino-acid polypeptide reads, in one-letter code: Small ribosomal subunit protein uS11 (130 aa).

It belongs to the universal ribosomal protein uS11 family. As to quaternary structure, part of the 30S ribosomal subunit. Interacts with proteins S7 and S18. Binds to IF-3.

Functionally, located on the platform of the 30S subunit, it bridges several disparate RNA helices of the 16S rRNA. Forms part of the Shine-Dalgarno cleft in the 70S ribosome. The sequence is that of Small ribosomal subunit protein uS11 from Alteromonas mediterranea (strain DSM 17117 / CIP 110805 / LMG 28347 / Deep ecotype).